We begin with the raw amino-acid sequence, 155 residues long: Regulatory protein RecX (155 aa).

It belongs to the RecX family.

The protein localises to the cytoplasm. Modulates RecA activity. This chain is Regulatory protein RecX, found in Pseudomonas syringae pv. tomato (strain ATCC BAA-871 / DC3000).